Consider the following 320-residue polypeptide: D-alanine--D-alanine ligase (320 aa).

The ATP-grasp domain occupies 120–314 (SSWFFANSIN…FTNLIAEIIK (195 aa)). ATP is bound at residue 147-198 (MKRPYVIKPLTQGSSIGVEVIFEEDDFNFADYDFPYGDQVVIERYIKGREFQ). Mg(2+) is bound by residues E267, E281, and N283.

The protein belongs to the D-alanine--D-alanine ligase family. Mg(2+) is required as a cofactor. Requires Mn(2+) as cofactor.

The protein resides in the cytoplasm. The catalysed reaction is 2 D-alanine + ATP = D-alanyl-D-alanine + ADP + phosphate + H(+). Its pathway is cell wall biogenesis; peptidoglycan biosynthesis. Its function is as follows. Cell wall formation. The polypeptide is D-alanine--D-alanine ligase (Rickettsia akari (strain Hartford)).